The following is a 264-amino-acid chain: Undecaprenyl-diphosphatase (264 aa).

A run of 8 helical transmembrane segments spans residues 7–27 (IVIP…PVSS), 45–65 (TKIL…LFFY), 86–106 (IHVL…YNKI), 109–129 (LFNP…LIIA), 145–165 (INLV…YPGF), 186–206 (VNFS…LDLI), 215–235 (LNIP…FLLI), and 244–264 (KVSL…IYFI).

This sequence belongs to the UppP family.

Its subcellular location is the cell membrane. The catalysed reaction is di-trans,octa-cis-undecaprenyl diphosphate + H2O = di-trans,octa-cis-undecaprenyl phosphate + phosphate + H(+). Functionally, catalyzes the dephosphorylation of undecaprenyl diphosphate (UPP). Confers resistance to bacitracin. This Buchnera aphidicola subsp. Schizaphis graminum (strain Sg) protein is Undecaprenyl-diphosphatase.